Reading from the N-terminus, the 484-residue chain is uncharacterized protein (484 aa).

It to M.thermoautotrophicum MTH1153.

This is an uncharacterized protein from Methanocaldococcus jannaschii (strain ATCC 43067 / DSM 2661 / JAL-1 / JCM 10045 / NBRC 100440) (Methanococcus jannaschii).